The chain runs to 128 residues: Modulator protein MzrA (128 aa).

Residues 1-13 are Cytoplasmic-facing; it reads MLALLRPYLSTRV. A helical transmembrane segment spans residues 14–34; it reads LCVLVVCFSALMLVAFIPTLF. Topologically, residues 35 to 128 are periplasmic; it reads RNDTALQIRA…RLSLRKQSVG (94 aa).

Belongs to the MzrA family. As to quaternary structure, interacts with EnvZ.

Its subcellular location is the cell inner membrane. Its function is as follows. Modulates the activity of the EnvZ/OmpR two-component regulatory system, probably by directly modulating EnvZ enzymatic activity and increasing stability of phosphorylated OmpR. The chain is Modulator protein MzrA from Erwinia billingiae (strain Eb661).